The chain runs to 195 residues: Recombination protein RecR (195 aa).

A C4-type zinc finger spans residues 56–71 (CRQCHSFSDDDICPIC). A Toprim domain is found at 79–174 (SVLCVVETAA…KVTRIAQGIP (96 aa)).

It belongs to the RecR family.

In terms of biological role, may play a role in DNA repair. It seems to be involved in an RecBC-independent recombinational process of DNA repair. It may act with RecF and RecO. This Psychrobacter sp. (strain PRwf-1) protein is Recombination protein RecR.